Consider the following 1088-residue polypeptide: RNA-directed RNA polymerase (1088 aa).

Residues 501–687 enclose the RdRp catalytic domain; sequence LSYGDVTRFL…AKRYIAGGKI (187 aa).

This sequence belongs to the reoviridae RNA-directed RNA polymerase family. In terms of assembly, interacts with VP3 (Potential). Interacts with VP2; this interaction activates VP1. Interacts with NSP5; this interaction is probably necessary for the formation of functional virus factories. Interacts with NSP2; this interaction is weak. Mg(2+) is required as a cofactor.

Its subcellular location is the virion. It catalyses the reaction RNA(n) + a ribonucleoside 5'-triphosphate = RNA(n+1) + diphosphate. RNA-directed RNA polymerase that is involved in both transcription and genome replication. Together with VP3 capping enzyme, forms an enzyme complex positioned near the channels situated at each of the five-fold vertices of the core. Following infection, the outermost layer of the virus is lost, leaving a double-layered particle (DLP) made up of the core and VP6 shell. VP1 then catalyzes the transcription of fully conservative plus-strand genomic RNAs that are extruded through the DLP's channels into the cytoplasm where they function as mRNAs for translation of viral proteins. One copy of each of the viral (+)RNAs is also recruited during core assembly, together with newly synthesized polymerase complexes and VP2. The polymerase of these novo-formed particles catalyzes the synthesis of complementary minus-strands leading to dsRNA formation. To do so, the polymerase specifically recognizes and binds 4 bases 5'-UGUG-3' in the conserved 3'-sequence of plus-strand RNA templates. VP2 presumably activates the autoinhibited VP1-RNA complex to coordinate packaging and genome replication. Once dsRNA synthesis is complete, the polymerase switches to the transcriptional mode, thus providing secondary transcription. This chain is RNA-directed RNA polymerase, found in Rotavirus A (strain RVA/Human/Philippines/L26/1987/G12P1B[4]) (RV-A).